The chain runs to 249 residues: Triosephosphate isomerase (249 aa).

Residue 11–13 (NWK) participates in substrate binding. His-91 serves as the catalytic Electrophile. The active-site Proton acceptor is the Glu-163. Residues Gly-169, Ser-208, and 229-230 (GG) contribute to the substrate site.

The protein belongs to the triosephosphate isomerase family. Homodimer.

It localises to the cytoplasm. The enzyme catalyses D-glyceraldehyde 3-phosphate = dihydroxyacetone phosphate. The protein operates within carbohydrate biosynthesis; gluconeogenesis. It functions in the pathway carbohydrate degradation; glycolysis; D-glyceraldehyde 3-phosphate from glycerone phosphate: step 1/1. Involved in the gluconeogenesis. Catalyzes stereospecifically the conversion of dihydroxyacetone phosphate (DHAP) to D-glyceraldehyde-3-phosphate (G3P). This Pseudoalteromonas translucida (strain TAC 125) protein is Triosephosphate isomerase.